A 292-amino-acid polypeptide reads, in one-letter code: 4-hydroxy-tetrahydrodipicolinate synthase (292 aa).

A pyruvate-binding site is contributed by threonine 45. Tyrosine 133 serves as the catalytic Proton donor/acceptor. Catalysis depends on lysine 162, which acts as the Schiff-base intermediate with substrate. Isoleucine 204 is a binding site for pyruvate.

The protein belongs to the DapA family. Homotetramer; dimer of dimers.

The protein resides in the cytoplasm. It carries out the reaction L-aspartate 4-semialdehyde + pyruvate = (2S,4S)-4-hydroxy-2,3,4,5-tetrahydrodipicolinate + H2O + H(+). Its pathway is amino-acid biosynthesis; L-lysine biosynthesis via DAP pathway; (S)-tetrahydrodipicolinate from L-aspartate: step 3/4. Its function is as follows. Catalyzes the condensation of (S)-aspartate-beta-semialdehyde [(S)-ASA] and pyruvate to 4-hydroxy-tetrahydrodipicolinate (HTPA). In Maridesulfovibrio salexigens (strain ATCC 14822 / DSM 2638 / NCIMB 8403 / VKM B-1763) (Desulfovibrio salexigens), this protein is 4-hydroxy-tetrahydrodipicolinate synthase.